Reading from the N-terminus, the 776-residue chain is Cullin-1 (776 aa).

At Arg63 the chain carries Omega-N-methylarginine. The region spanning 706 to 766 is the Cullin neddylation domain; the sequence is DRKLLIQAAI…IEKEYLERVD (61 aa). A Glycyl lysine isopeptide (Lys-Gly) (interchain with G-Cter in NEDD8) cross-link involves residue Lys720.

The protein belongs to the cullin family. As to quaternary structure, component of multiple Cul1-RING E3 ubiquitin-protein ligase complexes commonly known as SCF (SKP1-CUL1-F-box) complexes, consisting of CUL1, SKP1, RBX1 and a variable F-box domain-containing protein as substrate-specific subunit. Component of the SCF(FBXW11) complex containing FBXW11. Component of the SCF(SKP2) complex containing SKP2, in which it interacts directly with SKP1, SKP2 and RBX1. Component of the SCF(FBXW2) complex containing FBXW2. Component of the SCF(FBXO32) complex containing FBXO32. Component of the probable SCF(FBXO7) complex containing FBXO7. Component of the SCF(FBXO10) complex containing FBXO10. Component of the SCF(FBXO11) complex containing FBXO11. Component of the SCF(FBXO25) complex containing FBXO25. Component of the SCF(FBXO33) complex containing FBXO33. Component of the probable SCF(FBXO4) complex containing FBXO4. Component of the SCF(FBXO44) complex, composed of SKP1, CUL1 and FBXO44. Component of the SCF(BTRC) complex, composed of SKP1, CUL1 and BTRC. This complex binds phosphorylated NFKBIA. Part of a SCF complex consisting of CUL1, RBX1, SKP1 and FBXO2. Component of a SCF(SKP2)-like complex containing CUL1, SKP1, TRIM21 and SKP2. Component of the SCF(FBXO17) complex, composed of SKP1, CUL1 and FBXO17. Component of the SCF(FBXO27) complex, composed of SKP1, CUL1 and FBXO27. Component of the SCF(CCNF) complex consisting of CUL1, RBX1, SKP1 and CCNF. Interacts with CCNF. Component of the SCF(FBXL3) complex composed of CUL1, SKP1, RBX1 and FBXL3. Component of the SCF(FBXL21) complex composed of CUL1, SKP1, RBX1 and FBXL21. Component of the SCF(FBXO9) composed of CUL1, SKP1, RBX1 and FBXO9. Component of the SCF(FBXW7) composed of CUL1, SKP1, RBX1 and FBXW7. Component of the SCF(FBXO31) complex composed of CUL1, SKP1, RBX1 and FBXO31. Interacts with CHEK2; mediates CHEK2 ubiquitination and regulates its function. Part of a complex with TIP120A/CAND1 and RBX1. The unneddylated form interacts with TIP120A/CAND1 and the interaction mediates the exchange of the F-box substrate-specific subunit. Can self-associate. Interacts with FBXW8. Interacts with RNF7. Interacts with TRIM21. Interacts with COPS2. Interacts with UBE2M. Identified in a complex with RBX1 and GLMN. Interacts with CEP68 as part of the SCF(FBXW11) complex; the interaction is probably mediated by FBXW11 and the complex also contains CDK5RAP2 and PCNT. Interacts (when neddylated) with ARIH1; leading to activate the E3 ligase activity of ARIH1. Interacts with COPS9 isoform 2. Interacts with UBXN1. Interacts with KAT7, probably as part of an SCF complex; the interaction mediates KAT7 ubiquitination. Interacts with NOTCH2. Part of a complex that contains DCUN1D5, CUL1 and RBX1; this complex is bridged by CUL1. Interacts (unneddylated form) with DCUN1D1, DCUN1D2, DCUN1D3, DCUN1D4 and DCUN1D5; these interactions promote the cullin neddylation. Interacts (via the C-terminal domain) with CUL7; the interaction seems to be mediated by FBXW8; it is likely specific to FBXW8, but not other F-box proteins. Interacts with UBR2, as part of SCF(BTRC) complex; the interaction mediates 'Lys-48'-linked ubiquitination of UBR2 and is regulated by DUSP22 in the T-cell receptor signaling pathway. In terms of assembly, (Microbial infection) Interacts with Epstein-Barr virus BPLF1. (Microbial infection) Interacts with Human adenovirus early E1A protein; this interaction inhibits RBX1-CUL1-dependent elongation reaction of ubiquitin chains by the SCF(FBXW7) complex. As to quaternary structure, (Microbial infection) Interacts with vaccinia virus protein C9L. In terms of assembly, (Microbial infection) Interacts with Epstein-Barr virus (EBV) tegument protein BGLF2; this interaction might facilitate CUL1 recruitment to STAT2, leading to ubiquitination and degradation of the latter. Neddylated; which enhances the ubiquitination activity of SCF. Neddylation prevents binding of the inhibitor CAND1. Neddylation leads to structural rearrangment in the complex that allows interaction between the E2 ubiquitin-conjugating enzyme and the acceptor ubiquitin. Deneddylated via its interaction with the COP9 signalosome (CSN) complex. In terms of processing, (Microbial infection) Deneddylated by Epstein-Barr virus BPLF1 leading to a S-phase-like environment that is required for efficient replication of the viral genome. Expressed in lung fibroblasts.

It functions in the pathway protein modification; protein ubiquitination. Core component of multiple cullin-RING-based SCF (SKP1-CUL1-F-box protein) E3 ubiquitin-protein ligase complexes, which mediate the ubiquitination of proteins involved in cell cycle progression, signal transduction and transcription. SCF complexes and ARIH1 collaborate in tandem to mediate ubiquitination of target proteins. In the SCF complex, serves as a rigid scaffold that organizes the SKP1-F-box protein and RBX1 subunits. May contribute to catalysis through positioning of the substrate and the ubiquitin-conjugating enzyme. The E3 ubiquitin-protein ligase activity of the complex is dependent on the neddylation of the cullin subunit and exchange of the substrate recognition component is mediated by TIP120A/CAND1. The functional specificity of the SCF complex depends on the F-box protein as substrate recognition component. SCF(BTRC) and SCF(FBXW11) direct ubiquitination of CTNNB1 and participate in Wnt signaling. SCF(FBXW11) directs ubiquitination of phosphorylated NFKBIA. SCF(BTRC) directs ubiquitination of NFKBIB, NFKBIE, ATF4, SMAD3, SMAD4, CDC25A, FBXO5 and probably NFKB2. SCF(BTRC) and/or SCF(FBXW11) direct ubiquitination of CEP68. SCF(SKP2) directs ubiquitination of phosphorylated CDKN1B/p27kip and is involved in regulation of G1/S transition. SCF(SKP2) directs ubiquitination of ORC1, CDT1, RBL2, ELF4, CDKN1A, RAG2, FOXO1A, and probably MYC and TAL1. SCF(FBXW7) directs ubiquitination of CCNE1, NOTCH1 released notch intracellular domain (NICD), and probably PSEN1. SCF(FBXW2) directs ubiquitination of GCM1. SCF(FBXO32) directs ubiquitination of MYOD1. SCF(FBXO7) directs ubiquitination of BIRC2 and DLGAP5. SCF(FBXO33) directs ubiquitination of YBX1. SCF(FBXO1) directs ubiquitination of BCL6 and DTL but does not seem to direct ubiquitination of TP53. SCF(BTRC) mediates the ubiquitination of NFKBIA at 'Lys-21' and 'Lys-22'; the degradation frees the associated NFKB1-RELA dimer to translocate into the nucleus and to activate transcription. SCF(CCNF) directs ubiquitination of CCP110. SCF(FBXL3) and SCF(FBXL21) direct ubiquitination of CRY1 and CRY2. SCF(FBXO9) directs ubiquitination of TTI1 and TELO2. SCF(FBXO10) directs ubiquitination of BCL2. Neddylated CUL1-RBX1 ubiquitinates p53/TP53 recruited by Cul7-RING(FBXW8) complex. SCF(BTRC) directs 'Lys-48'-linked ubiquitination of UBR2 in the T-cell receptor signaling pathway. The SCF(FBXO31) protein ligase complex specifically mediates the ubiquitination of proteins amidated at their C-terminus in response to oxidative stress. The polypeptide is Cullin-1 (CUL1) (Homo sapiens (Human)).